Reading from the N-terminus, the 354-residue chain is 5,10-methenyltetrahydromethanopterin hydrogenase (354 aa).

This sequence belongs to the HMD family.

It carries out the reaction 5,10-methenyl-5,6,7,8-tetrahydromethanopterin + H2 = 5,10-methylenetetrahydromethanopterin + H(+). It participates in one-carbon metabolism; methanogenesis from CO(2); 5,10-methylene-5,6,7,8-tetrahydromethanopterin from 5,10-methenyl-5,6,7,8-tetrahydromethanopterin (hydrogen route): step 1/1. Catalyzes the reversible reduction of methenyl-H(4)MPT(+) to methylene-H(4)MPT. In Methanococcus maripaludis (strain C5 / ATCC BAA-1333), this protein is 5,10-methenyltetrahydromethanopterin hydrogenase.